A 234-amino-acid polypeptide reads, in one-letter code: HTH-type transcriptional regulator ArcR (234 aa).

40–129 (VRHYTKGQVI…MAFLCKANDD (90 aa)) lines the a nucleoside 3',5'-cyclic phosphate pocket. An HTH crp-type domain is found at 155–228 (KFAKDRIIKL…HKNWLVSKHL (74 aa)). Positions 188 to 207 (IQLMSDMAGISRETAGHIIH) form a DNA-binding region, H-T-H motif.

It is found in the cytoplasm. In terms of biological role, positively regulates the expression of the arcABDCR operon under anaerobic conditions, thus playing an essential role in arginine catabolism. May also control the expression of genes encoding proteins which are involved in anaerobic metabolism. Can bind cyclic AMP. The chain is HTH-type transcriptional regulator ArcR (arcR) from Staphylococcus aureus (strain MSSA476).